Reading from the N-terminus, the 910-residue chain is Dynein axonemal assembly factor 1 homolog (910 aa).

LRR repeat units lie at residues 43 to 64 (GLKCLWLECNAISNISGLDHQS), 65 to 86 (QLRCLYLHNNLIKKIENLQHCK), 87 to 108 (QLDTLNLSHNHIAKIENCGSDI), 111 to 132 (VLNTLNISHNYLKSIESLAELR), and 136 to 157 (FVSVLDISHNRIEDIAIVKVLA). The LRRCT domain occupies 171–209 (PVVNDIPSYRKTLILECKSLTYLDSRPVFDKDRACAEAW). The segment covering 217–230 (ERKEHQRWKKEEQR) has biased composition (basic and acidic residues). 6 disordered regions span residues 217–275 (ERKE…GDFE), 297–332 (TKGDTQQAQKLAEERKASTNSVDYITGSDSNSDPTL), 344–399 (SRAC…GSIL), 620–642 (EQVPDEVEANDKASDATIDPVDQ), 662–682 (QVEVGPSDPKDATTSKPIPEE), and 855–910 (EELE…QGDH). The span at 314 to 331 (STNSVDYITGSDSNSDPT) shows a compositional bias: polar residues. Residues 380-389 (SLSDSSSSSS) show a composition bias toward low complexity. Residues 620–633 (EQVPDEVEANDKAS) show a composition bias toward basic and acidic residues. Over residues 855-865 (EELEELNEEED) the composition is skewed to acidic residues. Residues 866-878 (PALKEAGDFKHDE) are compositionally biased toward basic and acidic residues.

It belongs to the DNAAF1 family.

It is found in the cell projection. The protein resides in the cilium. Functionally, cilium-specific protein required for cilia structures. In Anopheles gambiae (African malaria mosquito), this protein is Dynein axonemal assembly factor 1 homolog.